We begin with the raw amino-acid sequence, 363 residues long: Eukaryotic translation initiation factor 3 subunit H (363 aa).

The region spanning 13–163 (VQVEALVVMK…LRAFRLSTAF (151 aa)) is the MPN domain.

It belongs to the eIF-3 subunit H family. In terms of assembly, component of the eukaryotic translation initiation factor 3 (eIF-3) complex.

It localises to the cytoplasm. Component of the eukaryotic translation initiation factor 3 (eIF-3) complex, which is involved in protein synthesis of a specialized repertoire of mRNAs and, together with other initiation factors, stimulates binding of mRNA and methionyl-tRNAi to the 40S ribosome. The eIF-3 complex specifically targets and initiates translation of a subset of mRNAs involved in cell proliferation. This Pyricularia oryzae (strain 70-15 / ATCC MYA-4617 / FGSC 8958) (Rice blast fungus) protein is Eukaryotic translation initiation factor 3 subunit H.